We begin with the raw amino-acid sequence, 372 residues long: 18-hydroxynorfluorocurarine reductase (372 aa).

Positions 47, 50, 69, 70, 100, 103, 106, 114, and 172 each coordinate Zn(2+). Residues Gly-197–Gly-202, Lys-226, Leu-283–Ala-285, Ser-307, and Arg-354 each bind NADP(+).

This sequence belongs to the zinc-containing alcohol dehydrogenase family. Homodimer. Requires Zn(2+) as cofactor.

It catalyses the reaction (19E)-cur-19-en-17-al + NADP(+) = norfluorocurarine + NADPH + H(+). The catalysed reaction is 17,18-epoxy-17-hydroxycur-19-ene + NADP(+) = 18-hydroxynorfluorocurarine + NADPH + H(+). The protein operates within alkaloid biosynthesis. In terms of biological role, alcohol dehydrogenase involved in the biosynthesis of curare monoterpene indole alkaloids (MIAs), natural products such as diaboline, a pharmacologically active compound used to regulate blood pressure. Curare alkaloids act as animal glycine receptor antagonists. Catalyzes the conversion of norfluorocurarine to desoxy Wieland-Gumlich aldehyde, and of 18-OH norfluorocurarine to Wieland-Gumlich aldehyde. This chain is 18-hydroxynorfluorocurarine reductase, found in Strychnos sp.